Here is a 247-residue protein sequence, read N- to C-terminus: Adiponectin (247 aa).

The N-terminal stretch at Met1 to Ala17 is a signal peptide. Residues Thr23 and Thr24 are each glycosylated (O-linked (GalNAc...) threonine). Lys36 carries the 5-hydroxylysine modification. Cys39 carries the post-translational modification S-(2-succinyl)cysteine. Residues Ala44–Gly105 are disordered. The Collagen-like domain maps to Gly45 to Ala110. 3 positions are modified to 4-hydroxyproline: Pro47, Pro50, and Pro56. A compositionally biased stretch (basic and acidic residues) spans Arg58–Asp73. 5-hydroxylysine; alternate occurs at positions 68, 71, and 80. Lys68, Lys71, and Lys80 each carry an O-linked (Gal...) hydroxylysine; alternate glycan. Pro94 bears the 4-hydroxyproline mark. Lys104 carries the 5-hydroxylysine; alternate modification. Lys104 carries an O-linked (Gal...) hydroxylysine; alternate glycan. Positions Ala111 to Asn247 constitute a C1q domain.

Homomultimer. Forms trimers, hexamers and 12- to 18-mers. The trimers (low molecular weight complexes / LMW) are assembled via non-covalent interactions of the collagen-like domains in a triple helix and hydrophobic interactions within the globular C1q domain. Several trimers can associate to form disulfide-linked hexamers (middle molecular weight complexes / MMW) and larger complexes (higher molecular weight / HMW). The HMW-complex assembly is also modulated by the degree of lysine hydroxylation and glycosylation. LMW, MMW and HMW complexes bind to HBEGF, MMW and HMW complexes bind to PDGFB, and HMW complex binds to FGF2. Interacts with CTRP9 via the C1q domain (heterotrimeric complex). Post-translationally, HMW complexes are more extensively glycosylated than smaller oligomers. Hydroxylation and glycosylation of the lysine residues within the collagen-like domain of adiponectin seem to be critically involved in regulating the formation and/or secretion of HMW complexes and consequently contribute to the insulin-sensitizing activity of adiponectin in hepatocytes. In terms of processing, O-glycosylated. Not N-glycosylated O-linked glycans on hydroxylysine residues consist of Glc-Gal disaccharides bound to the oxygen atom of post-translationally added hydroxyl groups. O-linked glycosylation in the N-terminal is disialylated with the structure Neu5Acalpha2-&gt;8Neu5Acalpha2-&gt;3Gal. Sialylated by alpha 2,8-sialyltransferase III. Succination of Cys-39 by the Krebs cycle intermediate fumarate, which leads to S-(2-succinyl)cysteine residues, inhibits polymerization and secretion of adiponectin. Adiponectin is a major target for succination in both adipocytes and adipose tissue of diabetic mice. It was proposed that succination of proteins is a biomarker of mitochondrial stress and accumulation of Krebs cycle intermediates in adipose tissue in diabetes and that succination of adiponectin may contribute to the decrease in plasma adiponectin in diabetes. Synthesized exclusively by adipocytes and secreted into plasma.

Its subcellular location is the secreted. Polymerization and secretion of adiponectin is inhibited by succination of cysteine residues by the Krebs cycle intermediate fumarate, which leads to S-(2-succinyl)cysteine residues. Its function is as follows. Important adipokine involved in the control of fat metabolism and insulin sensitivity, with direct anti-diabetic, anti-atherogenic and anti-inflammatory activities. Stimulates AMPK phosphorylation and activation in the liver and the skeletal muscle, enhancing glucose utilization and fatty-acid combustion. Antagonizes TNF-alpha by negatively regulating its expression in various tissues such as liver and macrophages, and also by counteracting its effects. Inhibits endothelial NF-kappa-B signaling through a cAMP-dependent pathway. May play a role in cell growth, angiogenesis and tissue remodeling by binding and sequestering various growth factors with distinct binding affinities, depending on the type of complex, LMW, MMW or HMW. The sequence is that of Adiponectin (Adipoq) from Mus musculus (Mouse).